The primary structure comprises 180 residues: NAD(P)H-quinone oxidoreductase subunit I, chloroplastic (180 aa).

4Fe-4S ferredoxin-type domains are found at residues 55–84 (GRIH…VDWR) and 95–124 (LNYS…MTEE). Residues Cys64, Cys67, Cys70, Cys74, Cys104, Cys107, Cys110, and Cys114 each contribute to the [4Fe-4S] cluster site.

Belongs to the complex I 23 kDa subunit family. As to quaternary structure, NDH is composed of at least 16 different subunits, 5 of which are encoded in the nucleus. It depends on [4Fe-4S] cluster as a cofactor.

It is found in the plastid. Its subcellular location is the chloroplast thylakoid membrane. It carries out the reaction a plastoquinone + NADH + (n+1) H(+)(in) = a plastoquinol + NAD(+) + n H(+)(out). It catalyses the reaction a plastoquinone + NADPH + (n+1) H(+)(in) = a plastoquinol + NADP(+) + n H(+)(out). Its function is as follows. NDH shuttles electrons from NAD(P)H:plastoquinone, via FMN and iron-sulfur (Fe-S) centers, to quinones in the photosynthetic chain and possibly in a chloroplast respiratory chain. The immediate electron acceptor for the enzyme in this species is believed to be plastoquinone. Couples the redox reaction to proton translocation, and thus conserves the redox energy in a proton gradient. This is NAD(P)H-quinone oxidoreductase subunit I, chloroplastic from Drimys granadensis.